The primary structure comprises 197 residues: Adrenodoxin-like protein 2, mitochondrial (197 aa).

The N-terminal 74 residues, M1–G74, are a transit peptide targeting the mitochondrion. Residues I81–T184 form the 2Fe-2S ferredoxin-type domain. Residues C118, C124, C127, and C165 each contribute to the [2Fe-2S] cluster site.

This sequence belongs to the adrenodoxin/putidaredoxin family. [2Fe-2S] cluster serves as cofactor.

The protein localises to the mitochondrion. In terms of biological role, associates with the adrenodoxin reductase MFDR to form an efficient low potential electron transfer chain that is able to reduce cytochrome C. The polypeptide is Adrenodoxin-like protein 2, mitochondrial (Arabidopsis thaliana (Mouse-ear cress)).